Consider the following 504-residue polypeptide: Maturase K (504 aa).

The protein belongs to the intron maturase 2 family. MatK subfamily.

Its subcellular location is the plastid. The protein resides in the chloroplast. Usually encoded in the trnK tRNA gene intron. Probably assists in splicing its own and other chloroplast group II introns. The chain is Maturase K from Amaranthus caudatus (Love-lies-bleeding).